A 171-amino-acid polypeptide reads, in one-letter code: UPF0763 protein KHP_0657 (171 aa).

Belongs to the UPF0763 family.

The polypeptide is UPF0763 protein KHP_0657 (Helicobacter pylori (strain 51)).